A 1142-amino-acid polypeptide reads, in one-letter code: Enamelin (1142 aa).

An N-terminal signal peptide occupies residues 1-38 (MLLSCRHGASSPKLDNLVPSGKMKILLVFLGLLCYSAA). At serine 53 the chain carries Phosphoserine. Disordered stretches follow at residues 90–347 (YQMP…FYRN), 374–513 (YRRV…IIPK), 543–587 (TEGI…LSHG), and 603–662 (RENS…FPGQ). Positions 128 to 148 (QPQPKTPTPKQPLNEPSPTPT) are enriched in pro residues. Phosphoserine occurs at positions 191 and 216. Positions 223 to 234 (DFEKPKEKDPPK) are enriched in basic and acidic residues. 2 stretches are compositionally biased toward polar residues: residues 243 to 303 (SVNT…SQSP) and 381 to 395 (TARS…NSAN). 4 N-linked (GlcNAc...) asparagine glycosylation sites follow: asparagine 245, asparagine 252, asparagine 264, and asparagine 291. Positions 277–514 (NPRSNPTGQN…QTQTQIIPKG (238 aa)) are excised as a propeptide. Positions 431–442 (PREKQVSQKERT) are enriched in basic and acidic residues. Residues 453–467 (WRNSQDYGINKSNYK) are compositionally biased toward polar residues. The N-linked (GlcNAc...) asparagine glycan is linked to asparagine 462. Proline 547 is modified (hydroxyproline). A compositionally biased stretch (basic and acidic residues) spans 570–582 (FKEDPGRQEEHLP). The propeptide occupies 666 to 669 (DMEE). Polar residues predominate over residues 787–816 (NLYKTPTSSPHQKENQPYSNNSPAGLQKNP). Disordered stretches follow at residues 787 to 820 (NLYK…TWHE), 921 to 965 (TSIV…SQLS), and 1020 to 1049 (VFGT…QQRQ). Asparagine 929 carries N-linked (GlcNAc...) asparagine glycosylation. Over residues 952 to 965 (LRRSTPCSVKSQLS) the composition is skewed to polar residues. A glycan (N-linked (GlcNAc...) asparagine) is linked at asparagine 1040.

In terms of processing, proteolytically cleaved into several smaller polypeptides. Cleavage of N-terminal region of enamelin occurs soon after secretion. Post-translationally, phosphorylated by FAM20C in vitro. As to expression, expressed by secretory-phase ameloblasts. Intact enamelin and large-molecular-weight enamelins are limited to the most superficial layer of the developing enamel matrix, while low-molecular-weight enamelins are observed in deeper enamelin. Preferential localization among the crystallites in rod and interrod enamel.

The protein resides in the secreted. It is found in the extracellular space. It localises to the extracellular matrix. In terms of biological role, involved in the mineralization and structural organization of enamel. Involved in the extension of enamel during the secretory stage of dental enamel formation. This Sus scrofa (Pig) protein is Enamelin (ENAM).